The primary structure comprises 432 residues: Cyclic GMP-AMP synthase-like receptor (432 aa).

Residues S59 and 71–73 (EFD) each bind ATP. E71, D73, and D205 together coordinate Mg(2+). Residues D205 and 255-262 (KQTCSVLE) each bind GTP. ATP contacts are provided by residues 259 to 262 (SVLE), K284, and 303 to 307 (TYALK).

This sequence belongs to the mab-21 family. It depends on Mg(2+) as a cofactor. Requires Mn(2+) as cofactor.

The enzyme catalyses GTP + ATP = 2',3'-cGAMP + 2 diphosphate. It carries out the reaction GTP + ATP = pppGp(2'-5')A + diphosphate. It catalyses the reaction pppGp(2'-5')A = 2',3'-cGAMP + diphosphate. Functionally, nucleotidyltransferase that catalyzes the formation of cyclic GMP-AMP (2',3'-cGAMP) from ATP and GTP and plays a key role in innate immunity. Directly binds some unknown ligand, activating the nucleotidyltransferase activity, leading to synthesis of 2',3'-cGAMP, a second messenger that binds to and activates Sting, thereby triggering the immune response via activation of the NF-kappa-B transcription factor. This is Cyclic GMP-AMP synthase-like receptor from Pocillopora damicornis (Cauliflower coral).